The following is a 109-amino-acid chain: Flagellar hook-basal body complex protein FliE (109 aa).

It belongs to the FliE family.

The protein resides in the bacterial flagellum basal body. This is Flagellar hook-basal body complex protein FliE from Pseudomonas syringae pv. tomato (strain ATCC BAA-871 / DC3000).